A 121-amino-acid polypeptide reads, in one-letter code: Large ribosomal subunit protein uL14c (121 aa).

This sequence belongs to the universal ribosomal protein uL14 family. As to quaternary structure, part of the 50S ribosomal subunit.

The protein localises to the plastid. It is found in the chloroplast. Functionally, binds to 23S rRNA. This is Large ribosomal subunit protein uL14c from Guillardia theta (Cryptophyte).